Reading from the N-terminus, the 71-residue chain is Large ribosomal subunit protein bL31 (71 aa).

4 residues coordinate Zn(2+): C16, C18, C38, and C41.

This sequence belongs to the bacterial ribosomal protein bL31 family. Type A subfamily. In terms of assembly, part of the 50S ribosomal subunit. It depends on Zn(2+) as a cofactor.

In terms of biological role, binds the 23S rRNA. This is Large ribosomal subunit protein bL31 from Chromobacterium violaceum (strain ATCC 12472 / DSM 30191 / JCM 1249 / CCUG 213 / NBRC 12614 / NCIMB 9131 / NCTC 9757 / MK).